A 199-amino-acid polypeptide reads, in one-letter code: Adenine phosphoribosyltransferase (199 aa).

Belongs to the purine/pyrimidine phosphoribosyltransferase family. As to quaternary structure, homodimer.

The protein localises to the cytoplasm. The enzyme catalyses AMP + diphosphate = 5-phospho-alpha-D-ribose 1-diphosphate + adenine. It functions in the pathway purine metabolism; AMP biosynthesis via salvage pathway; AMP from adenine: step 1/1. Catalyzes a salvage reaction resulting in the formation of AMP, that is energically less costly than de novo synthesis. This chain is Adenine phosphoribosyltransferase, found in Rhodopseudomonas palustris (strain BisB18).